A 238-amino-acid polypeptide reads, in one-letter code: Ribonuclease 3 (238 aa).

One can recognise an RNase III domain in the interval 10–139 (FKQFQEQTGI…FIGALYLDQG (130 aa)). A Mg(2+)-binding site is contributed by Glu52. Asp56 is a catalytic residue. The Mg(2+) site is built by Asp125 and Glu128. Residue Glu128 is part of the active site. Residues 165-234 (DYKSQLQEFV…AQMALAKLKQ (70 aa)) form the DRBM domain.

Belongs to the ribonuclease III family. As to quaternary structure, homodimer. Mg(2+) is required as a cofactor.

Its subcellular location is the cytoplasm. The enzyme catalyses Endonucleolytic cleavage to 5'-phosphomonoester.. Digests double-stranded RNA. Involved in the processing of primary rRNA transcript to yield the immediate precursors to the large and small rRNAs (23S and 16S). Processes some mRNAs, and tRNAs when they are encoded in the rRNA operon. Processes pre-crRNA and tracrRNA of type II CRISPR loci if present in the organism. This Anoxybacillus flavithermus (strain DSM 21510 / WK1) protein is Ribonuclease 3.